A 276-amino-acid polypeptide reads, in one-letter code: Large ribosomal subunit protein uL2 (276 aa).

Disordered regions lie at residues 1 to 58 (MAIR…GGGH) and 218 to 276 (RPIT…KNRK). A compositionally biased stretch (polar residues) spans 16-27 (ASVSDFSDLTRS). Basic residues predominate over residues 255-276 (RRPKKASNKMIVRRRPNGKNRK).

This sequence belongs to the universal ribosomal protein uL2 family. Part of the 50S ribosomal subunit. Forms a bridge to the 30S subunit in the 70S ribosome.

Its function is as follows. One of the primary rRNA binding proteins. Required for association of the 30S and 50S subunits to form the 70S ribosome, for tRNA binding and peptide bond formation. It has been suggested to have peptidyltransferase activity; this is somewhat controversial. Makes several contacts with the 16S rRNA in the 70S ribosome. The chain is Large ribosomal subunit protein uL2 from Bifidobacterium animalis subsp. lactis (strain AD011).